The primary structure comprises 102 residues: Large ribosomal subunit protein bL36m (102 aa).

It belongs to the bacterial ribosomal protein bL36 family. Component of the mitochondrial ribosome large subunit (39S) which comprises a 16S rRNA and about 50 distinct proteins.

It localises to the mitochondrion. In Mus musculus (Mouse), this protein is Large ribosomal subunit protein bL36m (Mrpl36).